Consider the following 268-residue polypeptide: M1-specific T cell receptor alpha chain (268 aa).

The signal sequence occupies residues 1-19 (MVLKFSVSILWIQLAWVST). An Ig-like V-type domain is found at 20-107 (QLLEQSPQFL…QPGDTGLYLC (88 aa)). Residues 20 to 109 (QLLEQSPQFL…GDTGLYLCAG (90 aa)) are t cell receptor alpha variable 27. N36 and N42 each carry an N-linked (GlcNAc...) asparagine glycan. A disulfide bond links C41 and C107. A CDR1 region spans residues 45-49 (SVFSS). The interval 67–69 (VVT) is CDR2. The tract at residues 107–118 (CAGGGSQGNLIF) is CDR3. Residues 110-128 (GGSQGNLIFGKGTKLSVKP) are t cell receptor alpha joining 42. Residues 129-268 (IQNPDPAVYQ…LLMTLRLWSS (140 aa)) form a t cell receptor alpha constant region. The Ig-like C1-type domain maps to 147–235 (KSVCLFTDFD…LVEKSFETDT (89 aa)). An intrachain disulfide couples C150 to C200. Residues N160, N194, N205, and N241 are each glycosylated (N-linked (GlcNAc...) asparagine). A connecting peptide region spans residues 222 to 243 (CDVKLVEKSFETDTNLNFQNLS). The chain crosses the membrane as a helical span at residues 244 to 266 (VIGFRILLLKVAGFNLLMTLRLW). Topologically, residues 267 to 268 (SS) are cytoplasmic.

Disulfide-linked heterodimer with TRBV19*01J2S7*01C*02 beta chain. The TR primarily interacts via its CDR3-beta domain with M/matrix protein 1-derived peptide (GILGFVFTL) displayed by HLA-A*02.01 in a 'peg-notch' recognition mode. The alpha-beta TR associates with the transmembrane signaling CD3 coreceptor proteins to form the TR-CD3 (TCR). The assembly of alpha-beta TR heterodimers with CD3 occurs in the endoplasmic reticulum where a single alpha-beta TR heterodimer associates with one CD3D-CD3E heterodimer, one CD3G-CD3E heterodimer and one CD247 homodimer forming a stable octameric structure. CD3D-CD3E and CD3G-CD3E heterodimers preferentially associate with TR alpha and TR beta chains (via TM domain), respectively. The association of the CD247 homodimer is the last step of TCR assembly in the endoplasmic reticulum and is required for transport to the cell surface. In terms of tissue distribution, expressed in M/matrix protein 1-specific effector and memory CD8-positive T cells readily detectable in the peripheral blood, secondary lymphoid organs and lung (primary site of infection) of IAV infected individuals.

Its subcellular location is the cell membrane. Functionally, the alpha chain of TRAV27*01J42*01C*01/TRBV19*01J2S7*01C*02 alpha-beta T cell receptor (TR) clonotype that is specific for HLA-A*02:01-restricted M/matrix protein 1 immunodominant epitope GILGFVFTL of influenza A virus (IAV). Classified as a public TR clonotype, it is preferentially selected in effector memory CD8-positive T cells among multiple HLA-A*02:01 carriers and confers long-lived immunity against IAV infection. Can cross-recognize sporadically emerging IAV variants by molecular mimicry, inducing immunity toward different influenza strains. Antigen recognition initiates TR-CD3 clustering on the cell surface and intracellular activation of LCK that phosphorylates the ITAM motifs of CD3G, CD3D, CD3E and CD247 enabling the recruitment of ZAP70. In turn, ZAP70 phosphorylates LAT, which recruits numerous signaling molecules to form the LAT signalosome. The LAT signalosome propagates signal branching to three major signaling pathways, the calcium, the mitogen-activated protein kinase (MAPK) kinase and the nuclear factor NF-kappa-B (NF-kB) pathways, leading to the mobilization of transcription factors that are critical for gene expression and essential for T cell differentiation into effector/memory T cells. The polypeptide is M1-specific T cell receptor alpha chain (Homo sapiens (Human)).